Reading from the N-terminus, the 185-residue chain is Probable chorismate pyruvate-lyase 1 (185 aa).

3 residues coordinate substrate: arginine 70, leucine 108, and glutamate 166.

Belongs to the UbiC family.

It is found in the cytoplasm. It catalyses the reaction chorismate = 4-hydroxybenzoate + pyruvate. It functions in the pathway cofactor biosynthesis; ubiquinone biosynthesis. Its function is as follows. Removes the pyruvyl group from chorismate, with concomitant aromatization of the ring, to provide 4-hydroxybenzoate (4HB) for the ubiquinone pathway. This is Probable chorismate pyruvate-lyase 1 from Pseudomonas fluorescens (strain Pf0-1).